A 494-amino-acid chain; its full sequence is Leucine-rich repeat extensin-like protein 4 (494 aa).

A signal peptide spans 1 to 25 (MKNNTTQSLLLLLLFFFFFFEISHS). Asn60, Asn94, and Asn106 each carry an N-linked (GlcNAc...) asparagine glycan. LRR repeat units follow at residues 121–145 (IRTV…LGLL), 146–168 (TDLA…KFKQ), 169–193 (LKLL…VLHL), 194–217 (PSLK…LFSK), 219–240 (LDAI…FGDS), 242–263 (VSVI…LVEM), 264–287 (KNLN…IGRL), 289–311 (NVTV…VGGM), and 312–335 (VEVE…ICQL). Asn289 is a glycosylation site (N-linked (GlcNAc...) asparagine). Residue Asn340 is glycosylated (N-linked (GlcNAc...) asparagine). Residues 404-494 (SPPIVALPPP…YASPPPPPFY (91 aa)) form a contains the Ser-Pro(4) repeats region. Residues 422–479 (PPVYSPPPSPPVFSPPPSPPVYSPPPPPSIHYSSPPPPPVHHSSPPPPSPEFEGPLPP) are compositionally biased toward pro residues. The tract at residues 422–482 (PPVYSPPPSP…FEGPLPPVIG (61 aa)) is disordered.

In terms of processing, hydroxylated on proline residues in the S-P-P-P-P repeat. O-glycosylated on hydroxyprolines. As to expression, expressed in roots, stems, leaves and flowers, mostly in vascular tissues.

It localises to the secreted. Its subcellular location is the cell wall. Its function is as follows. Modulates cell morphogenesis by regulating cell wall formation and assembly, and/or growth polarization. In Arabidopsis thaliana (Mouse-ear cress), this protein is Leucine-rich repeat extensin-like protein 4 (LRX4).